A 58-amino-acid polypeptide reads, in one-letter code: Large ribosomal subunit protein bL32 (58 aa).

This sequence belongs to the bacterial ribosomal protein bL32 family.

The sequence is that of Large ribosomal subunit protein bL32 from Staphylococcus aureus (strain NCTC 8325 / PS 47).